Reading from the N-terminus, the 85-residue chain is ATP synthase subunit c (85 aa).

2 helical membrane passes run 10–30 (GLAL…GAIG) and 65–85 (AVAE…LLVV).

The protein belongs to the ATPase C chain family. In terms of assembly, F-type ATPases have 2 components, F(1) - the catalytic core - and F(0) - the membrane proton channel. F(1) has five subunits: alpha(3), beta(3), gamma(1), delta(1), epsilon(1). F(0) has three main subunits: a(1), b(2) and c(10-14). The alpha and beta chains form an alternating ring which encloses part of the gamma chain. F(1) is attached to F(0) by a central stalk formed by the gamma and epsilon chains, while a peripheral stalk is formed by the delta and b chains.

The protein localises to the cell inner membrane. In terms of biological role, f(1)F(0) ATP synthase produces ATP from ADP in the presence of a proton or sodium gradient. F-type ATPases consist of two structural domains, F(1) containing the extramembraneous catalytic core and F(0) containing the membrane proton channel, linked together by a central stalk and a peripheral stalk. During catalysis, ATP synthesis in the catalytic domain of F(1) is coupled via a rotary mechanism of the central stalk subunits to proton translocation. Key component of the F(0) channel; it plays a direct role in translocation across the membrane. A homomeric c-ring of between 10-14 subunits forms the central stalk rotor element with the F(1) delta and epsilon subunits. This Thermotoga maritima (strain ATCC 43589 / DSM 3109 / JCM 10099 / NBRC 100826 / MSB8) protein is ATP synthase subunit c.